The chain runs to 635 residues: GTPase-GDP dissociation stimulator vimar (635 aa).

ARM repeat units follow at residues 72–118 (KSEV…NICY), 346–391 (TDSH…NLVI), 392–432 (PKPN…MTVD), and 510–550 (RSSL…ILSV).

Interacts with Miro.

It is found in the endoplasmic reticulum. The protein localises to the mitochondrion. The protein resides in the cytoplasm. Its subcellular location is the cytosol. Probably acts as a GEF (guanine nucleotide exchange factor) for the Rho family of small GTP-binding proteins (G proteins) that stimulates the dissociation of GDP to enable subsequent binding of GTP. May also chaperone the processing and/or trafficking of small GTPases independently of GEF activity. By interacting with Miro, promotes mitochondrial fission in response to high calcium concentrations. The sequence is that of GTPase-GDP dissociation stimulator vimar from Drosophila melanogaster (Fruit fly).